We begin with the raw amino-acid sequence, 107 residues long: ATP synthase peripheral stalk subunit F6, mitochondrial (107 aa).

The transit peptide at 1-31 (MILQRLFRFSVIRSAVSVYLRRNIGVTAVAF) directs the protein to the mitochondrion. Lysine 40, lysine 45, and lysine 78 each carry N6-acetyllysine. N6-acetyllysine; alternate is present on residues lysine 93 and lysine 98. Residues lysine 93 and lysine 98 each carry the N6-succinyllysine; alternate modification. Position 104 is an N6-acetyllysine (lysine 104).

It belongs to the eukaryotic ATPase subunit F6 family. In terms of assembly, component of the ATP synthase complex composed at least of ATP5F1A/subunit alpha, ATP5F1B/subunit beta, ATP5MC1/subunit c (homooctomer), MT-ATP6/subunit a, MT-ATP8/subunit 8, ATP5ME/subunit e, ATP5MF/subunit f, ATP5MG/subunit g, ATP5MK/subunit k, ATP5MJ/subunit j, ATP5F1C/subunit gamma, ATP5F1D/subunit delta, ATP5F1E/subunit epsilon, ATP5PF/subunit F6, ATP5PB/subunit b, ATP5PD/subunit d, ATP5PO/subunit OSCP. ATP synthase complex consists of a soluble F(1) head domain (subunits alpha(3) and beta(3)) - the catalytic core - and a membrane F(0) domain - the membrane proton channel (subunits c, a, 8, e, f, g, k and j). These two domains are linked by a central stalk (subunits gamma, delta, and epsilon) rotating inside the F1 region and a stationary peripheral stalk (subunits F6, b, d, and OSCP).

Its subcellular location is the mitochondrion. The protein localises to the mitochondrion inner membrane. Its function is as follows. Subunit F6, of the mitochondrial membrane ATP synthase complex (F(1)F(0) ATP synthase or Complex V) that produces ATP from ADP in the presence of a proton gradient across the membrane which is generated by electron transport complexes of the respiratory chain. ATP synthase complex consist of a soluble F(1) head domain - the catalytic core - and a membrane F(1) domain - the membrane proton channel. These two domains are linked by a central stalk rotating inside the F(1) region and a stationary peripheral stalk. During catalysis, ATP synthesis in the catalytic domain of F(1) is coupled via a rotary mechanism of the central stalk subunits to proton translocation. In vivo, can only synthesize ATP although its ATP hydrolase activity can be activated artificially in vitro. Part of the complex F(0) domain. Part of the complex F(0) domain and the peripheric stalk, which acts as a stator to hold the catalytic alpha(3)beta(3) subcomplex and subunit a/ATP6 static relative to the rotary elements. The chain is ATP synthase peripheral stalk subunit F6, mitochondrial from Pongo abelii (Sumatran orangutan).